We begin with the raw amino-acid sequence, 247 residues long: Carboxy-S-adenosyl-L-methionine synthase (247 aa).

S-adenosyl-L-methionine contacts are provided by residues tyrosine 39, 64–66 (GCS), 89–90 (DN), 117–118 (DI), asparagine 132, and arginine 199.

This sequence belongs to the class I-like SAM-binding methyltransferase superfamily. Cx-SAM synthase family. As to quaternary structure, homodimer.

The enzyme catalyses prephenate + S-adenosyl-L-methionine = carboxy-S-adenosyl-L-methionine + 3-phenylpyruvate + H2O. Its function is as follows. Catalyzes the conversion of S-adenosyl-L-methionine (SAM) to carboxy-S-adenosyl-L-methionine (Cx-SAM). The chain is Carboxy-S-adenosyl-L-methionine synthase from Salmonella enteritidis PT4 (strain P125109).